The primary structure comprises 115 residues: NADH-ubiquinone oxidoreductase chain 3 (115 aa).

3 helical membrane-spanning segments follow: residues 4 to 24, 55 to 75, and 86 to 106; these read MLIL…AFWL, FFLV…LLPL, and MLMT…AYEW.

The protein belongs to the complex I subunit 3 family. Core subunit of respiratory chain NADH dehydrogenase (Complex I) which is composed of 45 different subunits. Interacts with TMEM186. Interacts with TMEM242.

Its subcellular location is the mitochondrion inner membrane. It carries out the reaction a ubiquinone + NADH + 5 H(+)(in) = a ubiquinol + NAD(+) + 4 H(+)(out). Core subunit of the mitochondrial membrane respiratory chain NADH dehydrogenase (Complex I) which catalyzes electron transfer from NADH through the respiratory chain, using ubiquinone as an electron acceptor. Essential for the catalytic activity of complex I. The chain is NADH-ubiquinone oxidoreductase chain 3 from Microtus pennsylvanicus (Meadow vole).